The primary structure comprises 165 residues: Nucleotide-binding protein Pro_0479 (165 aa).

Belongs to the YajQ family.

Functionally, nucleotide-binding protein. In Prochlorococcus marinus (strain SARG / CCMP1375 / SS120), this protein is Nucleotide-binding protein Pro_0479.